Consider the following 479-residue polypeptide: Anaerobic nitric oxide reductase flavorubredoxin (479 aa).

Residues 30-210 (LRGSSYNSYL…PFSRLVTPKI (181 aa)) form a zinc metallo-hydrolase region. Fe cation is bound by residues histidine 79, glutamate 81, aspartate 83, histidine 147, aspartate 166, and histidine 227. The Flavodoxin-like domain occupies 254–393 (ITIFYDTMSN…LCRQHGRDIA (140 aa)). Residues 260–264 (TMSNN) and 342–369 (AFGS…EMSL) contribute to the FMN site. The region spanning 423–474 (GPKMQCSVCQWIYDPAQGEPLQDVAPGTPWSDVPDNFLCPECSLGKDVFDVL) is the Rubredoxin-like domain. Residues cysteine 428, cysteine 431, cysteine 461, and cysteine 464 each contribute to the Fe cation site.

This sequence in the N-terminal section; belongs to the zinc metallo-hydrolase group 3 family. In terms of assembly, homotetramer. Requires Fe cation as cofactor. The cofactor is FMN.

It is found in the cytoplasm. Its pathway is nitrogen metabolism; nitric oxide reduction. In terms of biological role, anaerobic nitric oxide reductase; uses NADH to detoxify nitric oxide (NO), protecting several 4Fe-4S NO-sensitive enzymes. Has at least 2 reductase partners, only one of which (NorW, flavorubredoxin reductase) has been identified. NO probably binds to the di-iron center; electrons enter from the NorW at rubredoxin and are transferred sequentially to the FMN center and the di-iron center. Also able to function as an aerobic oxygen reductase. The sequence is that of Anaerobic nitric oxide reductase flavorubredoxin from Salmonella choleraesuis (strain SC-B67).